We begin with the raw amino-acid sequence, 271 residues long: 3'-phosphoadenosine 5'-phosphate phosphatase (271 aa).

E73, D91, L93, D94, and D216 together coordinate Mg(2+). E73 provides a ligand contact to substrate. Substrate-binding positions include 93-96 (LDGT) and D216.

This sequence belongs to the inositol monophosphatase superfamily. Homodimer. Mg(2+) is required as a cofactor.

It catalyses the reaction adenosine 3',5'-bisphosphate + H2O = AMP + phosphate. It carries out the reaction beta-D-fructose 1,6-bisphosphate + H2O = beta-D-fructose 6-phosphate + phosphate. The enzyme catalyses a myo-inositol phosphate + H2O = myo-inositol + phosphate. The protein operates within sulfur metabolism; sulfate assimilation. Its function is as follows. Phosphatase with a broad specificity. Its primary physiological function is to dephosphorylate 3'-phosphoadenosine 5'-phosphate (PAP) and 3'-phosphoadenosine 5'-phosphosulfate (PAPS). Thus, plays a role in mycobacterial sulfur metabolism, since it can serve as a key regulator of the sulfate assimilation pathway by controlling the pools of PAP and PAPS in the cell. To a lesser extent, is also able to hydrolyze inositol 1-phosphate (I-1-P), fructose 1,6-bisphosphate (FBP) (to fructose 6-phosphate (F-6-P)) and AMP in vitro, but this might not be significant in vivo. In Mycobacterium leprae (strain TN), this protein is 3'-phosphoadenosine 5'-phosphate phosphatase (cysQ).